A 129-amino-acid polypeptide reads, in one-letter code: Basic blue protein (129 aa).

A signal peptide spans 1–33; it reads MAKGRGSASWSARAIVTLMAVSVLLLQADYVQA. Residues 34–129 form the Phytocyanin domain; the sequence is ATYTVGDSGI…SDMKIAVTAV (96 aa). Cu cation-binding residues include His-72, Cys-112, His-117, and Met-122. A disulfide bridge links Cys-85 with Cys-118.

In terms of tissue distribution, expressed in the inflorescence and in the transmitting tract of the pistil. Detected in roots, stems, cauline leaves, cotyledons, hypocotyls, guard cells, pistils, sepals, stamen filaments and vascular bundles of roots but not of leaves. Not expressed in petals, anthers or pollen.

It localises to the secreted. The protein localises to the extracellular space. The protein resides in the extracellular matrix. Functionally, forms a concentration gradient along the pollen tube growth path, with a lower level in the stigma papilla cell wall and a higher level in the transmitting tract extracellular matix of the style. This Arabidopsis thaliana (Mouse-ear cress) protein is Basic blue protein (ARPN).